The primary structure comprises 171 residues: Peptide deformylase (171 aa).

Positions 91 and 133 each coordinate Fe cation. Glutamate 134 is an active-site residue. Histidine 137 serves as a coordination point for Fe cation.

Belongs to the polypeptide deformylase family. Fe(2+) serves as cofactor.

It catalyses the reaction N-terminal N-formyl-L-methionyl-[peptide] + H2O = N-terminal L-methionyl-[peptide] + formate. Its function is as follows. Removes the formyl group from the N-terminal Met of newly synthesized proteins. Requires at least a dipeptide for an efficient rate of reaction. N-terminal L-methionine is a prerequisite for activity but the enzyme has broad specificity at other positions. This chain is Peptide deformylase, found in Mannheimia succiniciproducens (strain KCTC 0769BP / MBEL55E).